Consider the following 365-residue polypeptide: D-alanine--D-alanine ligase (365 aa).

One can recognise an ATP-grasp domain in the interval 135 to 345 (KLLLKSFNIP…YESLVDNLVS (211 aa)). Residue 168-223 (KQSLNYPVIVKPAMLGSSIGISIAYNDTQIEKCIEEAFEYDLTVVVEKFMKVREIE) coordinates ATP. 3 residues coordinate Mg(2+): aspartate 298, glutamate 312, and asparagine 314.

It belongs to the D-alanine--D-alanine ligase family. The cofactor is Mg(2+). Requires Mn(2+) as cofactor.

Its subcellular location is the cytoplasm. The catalysed reaction is 2 D-alanine + ATP = D-alanyl-D-alanine + ADP + phosphate + H(+). It functions in the pathway cell wall biogenesis; peptidoglycan biosynthesis. Functionally, cell wall formation. The chain is D-alanine--D-alanine ligase from Borrelia hermsii (strain HS1 / DAH).